The sequence spans 604 residues: 3-hydroxy-3-methylglutaryl-coenzyme A reductase (604 aa).

The interval 1-31 (MDVRRRSEKPAYPTKEFAAGEKPLKPHKQQQ) is disordered. 2 helical membrane passes run 40-62 (ASDA…FFSV) and 90-110 (AIAS…IGFV). The tract at residues 111–189 (QSFVSRDNND…PLVTPAASEE (79 aa)) is linker. Positions 190-604 (DEEIIKSVVQ…STKDVTKASS (415 aa)) are catalytic. Residue E283 is the Charge relay system of the active site. N-linked (GlcNAc...) asparagine glycosylation occurs at N347. The Charge relay system role is filled by K415. The N-linked (GlcNAc...) asparagine glycan is linked to N460. D491 acts as the Charge relay system in catalysis. H589 acts as the Proton donor in catalysis. An N-linked (GlcNAc...) asparagine glycan is attached at N593.

Belongs to the HMG-CoA reductase family. Found in protoplasts and leaves submitted to stress. Low levels found in apexes, anthers and roots.

It localises to the endoplasmic reticulum membrane. It carries out the reaction (R)-mevalonate + 2 NADP(+) + CoA = (3S)-3-hydroxy-3-methylglutaryl-CoA + 2 NADPH + 2 H(+). It functions in the pathway metabolic intermediate biosynthesis; (R)-mevalonate biosynthesis; (R)-mevalonate from acetyl-CoA: step 3/3. Functionally, catalyzes the synthesis of mevalonate, the specific precursor of all isoprenoid compounds present in plants. Possible role in plant defense mechanisms as well as in the cell cycle. The protein is 3-hydroxy-3-methylglutaryl-coenzyme A reductase (HMGR) of Nicotiana sylvestris (Wood tobacco).